Reading from the N-terminus, the 368-residue chain is Ribosomal RNA large subunit methyltransferase M (368 aa).

Residues S189, 222–225 (CPGG), D241, D261, and D278 contribute to the S-adenosyl-L-methionine site. Catalysis depends on K307, which acts as the Proton acceptor.

It belongs to the class I-like SAM-binding methyltransferase superfamily. RNA methyltransferase RlmE family. RlmM subfamily. Monomer.

The protein localises to the cytoplasm. The enzyme catalyses cytidine(2498) in 23S rRNA + S-adenosyl-L-methionine = 2'-O-methylcytidine(2498) in 23S rRNA + S-adenosyl-L-homocysteine + H(+). Its function is as follows. Catalyzes the 2'-O-methylation at nucleotide C2498 in 23S rRNA. The protein is Ribosomal RNA large subunit methyltransferase M of Yersinia enterocolitica serotype O:8 / biotype 1B (strain NCTC 13174 / 8081).